Here is a 242-residue protein sequence, read N- to C-terminus: ATP synthase subunit b (242 aa).

2 consecutive transmembrane segments (helical) span residues 8–28 (VLPFLLVLLFAFAPLALASAP) and 87–107 (LMDLFWRVLNFAVLMAILIKF).

This sequence belongs to the ATPase B chain family. As to quaternary structure, F-type ATPases have 2 components, F(1) - the catalytic core - and F(0) - the membrane proton channel. F(1) has five subunits: alpha(3), beta(3), gamma(1), delta(1), epsilon(1). F(0) has three main subunits: a(1), b(2) and c(10-14). The alpha and beta chains form an alternating ring which encloses part of the gamma chain. F(1) is attached to F(0) by a central stalk formed by the gamma and epsilon chains, while a peripheral stalk is formed by the delta and b chains.

The protein localises to the cell inner membrane. Functionally, f(1)F(0) ATP synthase produces ATP from ADP in the presence of a proton or sodium gradient. F-type ATPases consist of two structural domains, F(1) containing the extramembraneous catalytic core and F(0) containing the membrane proton channel, linked together by a central stalk and a peripheral stalk. During catalysis, ATP synthesis in the catalytic domain of F(1) is coupled via a rotary mechanism of the central stalk subunits to proton translocation. In terms of biological role, component of the F(0) channel, it forms part of the peripheral stalk, linking F(1) to F(0). The polypeptide is ATP synthase subunit b (Desulfotalea psychrophila (strain LSv54 / DSM 12343)).